The chain runs to 276 residues: 2-dehydro-3-deoxyphosphooctonate aldolase (276 aa).

This sequence belongs to the KdsA family.

The protein resides in the cytoplasm. The enzyme catalyses D-arabinose 5-phosphate + phosphoenolpyruvate + H2O = 3-deoxy-alpha-D-manno-2-octulosonate-8-phosphate + phosphate. The protein operates within carbohydrate biosynthesis; 3-deoxy-D-manno-octulosonate biosynthesis; 3-deoxy-D-manno-octulosonate from D-ribulose 5-phosphate: step 2/3. Its pathway is bacterial outer membrane biogenesis; lipopolysaccharide biosynthesis. The protein is 2-dehydro-3-deoxyphosphooctonate aldolase of Xanthomonas euvesicatoria pv. vesicatoria (strain 85-10) (Xanthomonas campestris pv. vesicatoria).